The sequence spans 1116 residues: Probable chitinase LysM11 (1116 aa).

Residues 233–283 (GTYTIQTNDNCAEIAAHFGVTQDDIYDLNEDTWGWAGCGTNDLKADQVICL) form the LysM domain. In terms of domain architecture, GH18 spans 346 to 719 (FYHVAYFEVF…LGVDPDSDEA (374 aa)). Glu-466 (proton donor) is an active-site residue. Residues Tyr-467 and Trp-701 each contribute to the chitin site.

Belongs to the glycosyl hydrolase 18 family. Chitinase class V subfamily.

The catalysed reaction is Random endo-hydrolysis of N-acetyl-beta-D-glucosaminide (1-&gt;4)-beta-linkages in chitin and chitodextrins.. Functionally, probable chitinase involved in the degradation of chitin, a component of the cell walls of fungi and exoskeletal elements of some animals (including worms and arthropods). Might be involved in manipulation of host defenses for successful infection. This Penicillium expansum (Blue mold rot fungus) protein is Probable chitinase LysM11.